The chain runs to 397 residues: Cysteine desulfurase IscS (397 aa).

Pyridoxal 5'-phosphate-binding positions include 72–73 (GS), N152, Q180, and 200–202 (SAH). K203 carries the N6-(pyridoxal phosphate)lysine modification. T238 serves as a coordination point for pyridoxal 5'-phosphate. Catalysis depends on C328, which acts as the Cysteine persulfide intermediate. C328 is a binding site for [2Fe-2S] cluster.

It belongs to the class-V pyridoxal-phosphate-dependent aminotransferase family. NifS/IscS subfamily. Homodimer. Forms a heterotetramer with IscU, interacts with other sulfur acceptors. Requires pyridoxal 5'-phosphate as cofactor.

It localises to the cytoplasm. The catalysed reaction is (sulfur carrier)-H + L-cysteine = (sulfur carrier)-SH + L-alanine. It participates in cofactor biosynthesis; iron-sulfur cluster biosynthesis. Functionally, master enzyme that delivers sulfur to a number of partners involved in Fe-S cluster assembly, tRNA modification or cofactor biosynthesis. Catalyzes the removal of elemental sulfur atoms from cysteine to produce alanine. Functions as a sulfur delivery protein for Fe-S cluster synthesis onto IscU, an Fe-S scaffold assembly protein, as well as other S acceptor proteins. The sequence is that of Cysteine desulfurase IscS from Clostridium botulinum (strain ATCC 19397 / Type A).